The primary structure comprises 529 residues: Delayed-rectifier potassium channel regulatory subunit KCNS1 (529 aa).

The Cytoplasmic segment spans residues 1–217 (MLMLLVRGTR…LTMENPGYSL (217 aa)). A helical transmembrane segment spans residues 218–239 (PSKLFSCVSISVVLASIAAMCI). Topologically, residues 240 to 270 (HSLPEYQAREAAAAVAAVAAGRSPEGVRDDP) are extracellular. Residues 271-293 (VLRRLEYFCIAWFSFEVSSRLLL) form a helical membrane-spanning segment. Residues 294 to 304 (APSTRNFFCHP) are Cytoplasmic-facing. A helical membrane pass occupies residues 305–322 (LNLIDIVSVLPFYLTLLA). Residues 323–340 (GVALGDQGGTGGKELGHL) lie on the Extracellular side of the membrane. The helical; Voltage-sensor transmembrane segment at 341 to 361 (GKVVQVFRLMRIFRVLKLARH) threads the bilayer. Residues 362 to 376 (STGLRSLGATLKHSY) lie on the Cytoplasmic side of the membrane. The chain crosses the membrane as a helical span at residues 377–398 (REVGILLLYLAVGVSVFSGVAY). The Extracellular portion of the chain corresponds to 399–411 (TAEKEEDVGFNTI). Residues 412–423 (PACWWWGTVSMT) constitute an intramembrane region (helical). The short motif at 424–429 (TVGYGD) is the Selectivity filter element. The stretch at 424–431 (TVGYGDVV) is an intramembrane region. Over 432–438 (PVTVAGK) the chain is Extracellular. The chain crosses the membrane as a helical span at residues 439–467 (LAASGCILGGILVVALPITIIFNKFSHFY). Topologically, residues 468-529 (RRQKALEAAV…PSEPPHPQMY (62 aa)) are cytoplasmic. Positions 500 to 529 (LETSREISQEGRSADLETQAPSEPPHPQMY) are disordered. Over residues 502-514 (TSREISQEGRSAD) the composition is skewed to basic and acidic residues.

The protein belongs to the potassium channel family. S (TC 1.A.1.2) subfamily. Kv9.1/KCNS1 sub-subfamily. In terms of assembly, heterotetramer with KCNB1. Heterotetramer with KCNB2. Does not form homomultimers.

Its subcellular location is the cell membrane. Its function is as follows. Potassium channel regulatory subunit that modulate the delayed rectifier voltage-gated potassium channel activity of KCNB1 and KCNB2 by altering their kinetics, expression levels, and shifting the half-inactivation potential to more polarized values. While it does not form functional channels on its own, it can form functional heterotetrameric channels with KCNB1 and KCNB2. Each regulatory subunit has unique regulatory properties that can lead to extensive inhibition, significant changes in kinetics, and/or substantial shifts in the voltage dependencies of the inactivation process. The protein is Delayed-rectifier potassium channel regulatory subunit KCNS1 of Colobus guereza (Mantled guereza).